Reading from the N-terminus, the 748-residue chain is Putative transmembrane protein ORF88 (748 aa).

An N-terminal signal peptide occupies residues 1 to 20 (MIIMKSIILLLAWFLTKTQA). Topologically, residues 21 to 723 (NMLTESLYLS…LNLAPFKTLS (703 aa)) are extracellular. N-linked (GlcNAc...) asparagine; by host glycans are attached at residues asparagine 55, asparagine 78, asparagine 99, asparagine 152, asparagine 189, asparagine 390, asparagine 467, and asparagine 499. Positions 531 to 574 (LTFDSPPPPPTTTQAPPPPPTTTQAPPPPPTTTQAPPPPIVINT) are disordered. Positions 535-570 (SPPPPPTTTQAPPPPPTTTQAPPPPPTTTQAPPPPI) are enriched in pro residues. N-linked (GlcNAc...) asparagine; by host glycosylation is found at asparagine 573, asparagine 584, asparagine 599, asparagine 612, and asparagine 617. The segment at 650 to 680 (PSIGRAPIPPPDVPVEPPRSIPTTNAPSPEE) is disordered. A compositionally biased stretch (pro residues) spans 656–669 (PIPPPDVPVEPPRS). Residues 724–744 (YAGIGVVSFALLFTILVVCLI) form a helical membrane-spanning segment. At 745–748 (KFSI) the chain is on the cytoplasmic side.

Its subcellular location is the host membrane. The protein is Putative transmembrane protein ORF88 of Magallana gigas (Pacific oyster).